Consider the following 100-residue polypeptide: Urease subunit gamma (100 aa).

Belongs to the urease gamma subunit family. Heterotrimer of UreA (gamma), UreB (beta) and UreC (alpha) subunits. Three heterotrimers associate to form the active enzyme.

The protein localises to the cytoplasm. The catalysed reaction is urea + 2 H2O + H(+) = hydrogencarbonate + 2 NH4(+). The protein operates within nitrogen metabolism; urea degradation; CO(2) and NH(3) from urea (urease route): step 1/1. In Kocuria rhizophila (strain ATCC 9341 / DSM 348 / NBRC 103217 / DC2201), this protein is Urease subunit gamma.